The sequence spans 119 residues: UPF0231 protein ECA3777 (119 aa).

The protein belongs to the UPF0231 family.

This chain is UPF0231 protein ECA3777, found in Pectobacterium atrosepticum (strain SCRI 1043 / ATCC BAA-672) (Erwinia carotovora subsp. atroseptica).